We begin with the raw amino-acid sequence, 259 residues long: Methionine aminopeptidase (259 aa).

A substrate-binding site is contributed by His-78. The a divalent metal cation site is built by Asp-95, Asp-106, and His-169. His-176 is a substrate binding site. Glu-202 serves as a coordination point for a divalent metal cation. Trp-220 is a substrate binding site. Glu-234 provides a ligand contact to a divalent metal cation.

It belongs to the peptidase M24A family. Methionine aminopeptidase type 1 subfamily. In terms of assembly, monomer. It depends on Co(2+) as a cofactor. Requires Zn(2+) as cofactor. Mn(2+) is required as a cofactor. Fe(2+) serves as cofactor.

The catalysed reaction is Release of N-terminal amino acids, preferentially methionine, from peptides and arylamides.. In terms of biological role, removes the N-terminal methionine from nascent proteins. The N-terminal methionine is often cleaved when the second residue in the primary sequence is small and uncharged (Met-Ala-, Cys, Gly, Pro, Ser, Thr, or Val). Requires deformylation of the N(alpha)-formylated initiator methionine before it can be hydrolyzed. In Rickettsia prowazekii (strain Madrid E), this protein is Methionine aminopeptidase.